The sequence spans 260 residues: G patch domain-containing protein 11 (260 aa).

A coiled-coil region spans residues 25–61; that stretch reads MLRQIREARRKEEKRQEANLKNRQKSIKEEEQERRDM. A disordered region spans residues 33 to 60; sequence RRKEEKRQEANLKNRQKSIKEEEQERRD. The 47-residue stretch at 69–115 folds into the G-patch domain; it reads CENKGFALLQKMGYKSGQALGKSGDGIVEPIPLNVKTGKSGIGHETL. At Lys123 the chain carries N6-acetyllysine. Residues 187-212 form a disordered region; it reads WLRPEEETEEETEEEKEQDEDEYKSE. Positions 192 to 210 are enriched in acidic residues; sequence EETEEETEEEKEQDEDEYK.

This sequence belongs to the GPATCH11 family.

Its subcellular location is the chromosome. The protein resides in the centromere. It is found in the kinetochore. This is G patch domain-containing protein 11 (GPATCH11) from Bos taurus (Bovine).